The sequence spans 111 residues: Ghrelin (111 aa).

The first 26 residues, 1-26, serve as a signal peptide directing secretion; sequence MRQMKRTAYIILLVCVLALWMDSVQA. The segment covering 28-37 has biased composition (polar residues); sequence SSFLSPSQRP. The segment at 28-53 is disordered; sequence SSFLSPSQRPQGKDKKPPRVGRRDSD. Serine 29 carries the O-decanoyl serine; alternate lipid modification. The O-hexanoyl serine; alternate moiety is linked to residue serine 29. Serine 29 carries the O-octanoyl serine; alternate lipid modification. The span at 38-53 shows a compositional bias: basic and acidic residues; it reads QGKDKKPPRVGRRDSD. The residue at position 47 (valine 47) is a Valine amide. The propeptide at 51–111 is removed in mature form; that stretch reads DSDGILDLFM…DLLMDTPAKE (61 aa).

The protein belongs to the motilin family. Post-translationally, O-octanoylated by GOAT/MBOAT4. O-octanoylation or O-decanoylation is essential for activity. The O-decanoylated form ghrelin-21-C10 differs in the length of the carbon backbone of the carboxylic acid forming an ester bond with Ser-29. 44% of eel ghrelin is O-decanoylated. Highest levels in stomach and anterior intestine. Lower levels in posterior intestine, kidney and brain. Low levels in heart, head kidney and middle intestine.

Its subcellular location is the secreted. Functionally, ligand for growth hormone secretagogue receptor type 1 (GHSR). Induces the release of growth hormone from the pituitary. Has an appetite-stimulating effect, induces adiposity and stimulates gastric acid secretion. Involved in growth regulation. In Anguilla japonica (Japanese eel), this protein is Ghrelin (ghrl).